The following is a 63-amino-acid chain: Chymotrypsin/elastase isoinhibitor 1 (63 aa).

Cystine bridges form between C5/C38, C14/C33, C17/C29, C21/C60, and C40/C54. The TIL domain maps to 5-60; that stretch reads CGPNEVWTECTGCEMKCGPDENTPCPLMCRRPSCECSPGRGMRRTNDGKCIPASQC.

The protein belongs to the serine protease inhibitor-like (TIL domain-containing) family.

Its subcellular location is the secreted. Its function is as follows. Defends the organism against the host's proteinases. The polypeptide is Chymotrypsin/elastase isoinhibitor 1 (Ascaris suum (Pig roundworm)).